Here is a 425-residue protein sequence, read N- to C-terminus: Histidine--tRNA ligase (425 aa).

Belongs to the class-II aminoacyl-tRNA synthetase family. Homodimer.

The protein resides in the cytoplasm. It catalyses the reaction tRNA(His) + L-histidine + ATP = L-histidyl-tRNA(His) + AMP + diphosphate + H(+). The sequence is that of Histidine--tRNA ligase from Erwinia tasmaniensis (strain DSM 17950 / CFBP 7177 / CIP 109463 / NCPPB 4357 / Et1/99).